The chain runs to 155 residues: Small ribosomal subunit protein uS7 (155 aa).

Belongs to the universal ribosomal protein uS7 family. As to quaternary structure, part of the 30S ribosomal subunit. Contacts proteins S9 and S11.

Its function is as follows. One of the primary rRNA binding proteins, it binds directly to 16S rRNA where it nucleates assembly of the head domain of the 30S subunit. Is located at the subunit interface close to the decoding center, probably blocks exit of the E-site tRNA. This chain is Small ribosomal subunit protein uS7, found in Mesoplasma florum (strain ATCC 33453 / NBRC 100688 / NCTC 11704 / L1) (Acholeplasma florum).